Reading from the N-terminus, the 581-residue chain is Proline--tRNA ligase (581 aa).

This sequence belongs to the class-II aminoacyl-tRNA synthetase family. ProS type 1 subfamily. Homodimer.

It localises to the cytoplasm. It carries out the reaction tRNA(Pro) + L-proline + ATP = L-prolyl-tRNA(Pro) + AMP + diphosphate. Its function is as follows. Catalyzes the attachment of proline to tRNA(Pro) in a two-step reaction: proline is first activated by ATP to form Pro-AMP and then transferred to the acceptor end of tRNA(Pro). As ProRS can inadvertently accommodate and process non-cognate amino acids such as alanine and cysteine, to avoid such errors it has two additional distinct editing activities against alanine. One activity is designated as 'pretransfer' editing and involves the tRNA(Pro)-independent hydrolysis of activated Ala-AMP. The other activity is designated 'posttransfer' editing and involves deacylation of mischarged Ala-tRNA(Pro). The misacylated Cys-tRNA(Pro) is not edited by ProRS. The protein is Proline--tRNA ligase of Verminephrobacter eiseniae (strain EF01-2).